The sequence spans 1502 residues: tRNA (32-2'-O)-methyltransferase regulator trm732 (1502 aa).

Belongs to the THADA family.

Its subcellular location is the cytoplasm. The protein resides in the nucleus. Together with methyltransferase trm7, methylates the 2'-O-ribose of nucleotides at position 32 of the anticodon loop of substrate tRNAs. This chain is tRNA (32-2'-O)-methyltransferase regulator trm732, found in Schizosaccharomyces pombe (strain 972 / ATCC 24843) (Fission yeast).